A 363-amino-acid polypeptide reads, in one-letter code: Aminopyrrolnitrin oxygenase PrnD (363 aa).

Residues 29-137 (WYVAMRSNEL…TAERYGYVWV (109 aa)) enclose the Rieske domain. [2Fe-2S] cluster is bound by residues cysteine 69, histidine 71, cysteine 88, and histidine 91.

In terms of assembly, homodimer. [2Fe-2S] cluster serves as cofactor. It depends on Fe cation as a cofactor. The cofactor is FMN.

It carries out the reaction aminopyrrolnitrin + NADPH + 2 O2 + H(+) = pyrrolnitrin + NADP(+) + 2 H2O. It functions in the pathway antibiotic biosynthesis. Involved in the biosynthesis of the antifungal antibiotic pyrrolnitrin (PRN). Catalyzes the oxidation of the amino group of aminopyrrolnitrin (APRN) to a nitro group to form PRN. It has high substrate specificity toward physiological substrate aminopyrrolnitrin, p-aminobenzylamine (pABA), p-aminobenzyl alcohol, and p-aminophenyl alanine. In Pseudomonas fluorescens, this protein is Aminopyrrolnitrin oxygenase PrnD (prnD).